Reading from the N-terminus, the 391-residue chain is 2-deoxy-scyllo-inosose synthase (391 aa).

NAD(+) contacts are provided by residues Asp42, 73 to 76, 105 to 109, 129 to 130, 140 to 142, and 151 to 152; these read EVHK, GVTGN, TT, SLK, and KN. Lys142 is an active-site residue. Glu184 provides a ligand contact to Co(2+). The active site involves Glu244. Residues His247 and His263 each contribute to the Co(2+) site.

This sequence belongs to the sugar phosphate cyclases superfamily. DOI synthase family. It depends on NAD(+) as a cofactor. Co(2+) serves as cofactor.

It catalyses the reaction D-glucose 6-phosphate = 2-deoxy-L-scyllo-inosose + phosphate. It participates in metabolic intermediate biosynthesis; 2-deoxystreptamine biosynthesis; 2-deoxystreptamine from D-glucose 6-phosphate: step 1/4. Its pathway is antibiotic biosynthesis; ribostamycin biosynthesis. Its function is as follows. Catalyzes the intramolecular carbocycle formation from D-glucose-6-phosphate to 2-deoxy-scyllo-inosose (DOI). This Streptomyces ribosidificus protein is 2-deoxy-scyllo-inosose synthase (rbmA).